Here is a 376-residue protein sequence, read N- to C-terminus: NADPH oxidase organizer 1 (376 aa).

The region spanning 1 to 131 (MAGPRYPVSV…GFFAPQPLDL (131 aa)) is the PX domain. 2 SH3 domains span residues 163-225 (LEAQ…EAAP) and 237-296 (SSGP…PEGL). The tract at residues 302-376 (GTGFRGGDDP…DSVPHPTTEQ (75 aa)) is disordered. Positions 326–335 (APPPTVPTRP) are enriched in pro residues. A proline-rich region; mediates mutually exclusive interactions with itself and NOXA1 region spans residues 328-337 (PPTVPTRPSP).

Interacts with NOX1, NOXA1, CYBA/p22phox and NCF2/p67phox. Interacts with SH3PXD2A and SH3PXD2B. As to expression, expressed in testis, small and large intestines, liver, kidney and pancreas. Isoform 3 is mainly expressed in colon. Isoform 1 is preferentially expressed in testis.

It is found in the cell membrane. Functionally, constitutively potentiates the superoxide-generating activity of NOX1 and NOX3 and is required for the biogenesis of otoconia/otolith, which are crystalline structures of the inner ear involved in the perception of gravity. Isoform 3 is more potent than isoform 1 in activating NOX3. Together with NOXA1, may also substitute to NCF1/p47phox and NCF2/p67phox in supporting the phagocyte NOX2/gp91phox superoxide-generating activity. The sequence is that of NADPH oxidase organizer 1 (NOXO1) from Homo sapiens (Human).